Consider the following 201-residue polypeptide: Small ribosomal subunit protein uS4 (201 aa).

Positions S91–V157 constitute an S4 RNA-binding domain.

The protein belongs to the universal ribosomal protein uS4 family. Part of the 30S ribosomal subunit. Contacts protein S5. The interaction surface between S4 and S5 is involved in control of translational fidelity.

Its function is as follows. One of the primary rRNA binding proteins, it binds directly to 16S rRNA where it nucleates assembly of the body of the 30S subunit. With S5 and S12 plays an important role in translational accuracy. The chain is Small ribosomal subunit protein uS4 from Rhodococcus erythropolis (strain PR4 / NBRC 100887).